The primary structure comprises 407 residues: S-adenosylmethionine synthase (407 aa).

Position 15 (H15) interacts with ATP. A Mg(2+)-binding site is contributed by D17. Residue E43 participates in K(+) binding. Residues E56 and Q100 each coordinate L-methionine. The segment at 100 to 110 (QSPDIAQGVDE) is flexible loop. ATP-binding positions include 171–173 (DGK), 248–249 (KF), D257, 263–264 (RK), A280, and K284. Residue D257 participates in L-methionine binding. L-methionine is bound at residue K288.

It belongs to the AdoMet synthase family. As to quaternary structure, homotetramer; dimer of dimers. Mg(2+) is required as a cofactor. K(+) serves as cofactor.

The protein resides in the cytoplasm. It catalyses the reaction L-methionine + ATP + H2O = S-adenosyl-L-methionine + phosphate + diphosphate. It participates in amino-acid biosynthesis; S-adenosyl-L-methionine biosynthesis; S-adenosyl-L-methionine from L-methionine: step 1/1. In terms of biological role, catalyzes the formation of S-adenosylmethionine (AdoMet) from methionine and ATP. The overall synthetic reaction is composed of two sequential steps, AdoMet formation and the subsequent tripolyphosphate hydrolysis which occurs prior to release of AdoMet from the enzyme. The polypeptide is S-adenosylmethionine synthase (Synechococcus sp. (strain RCC307)).